An 88-amino-acid polypeptide reads, in one-letter code: Large ribosomal subunit protein bL31B (88 aa).

It belongs to the bacterial ribosomal protein bL31 family. Type B subfamily. In terms of assembly, part of the 50S ribosomal subunit.

In Bordetella pertussis (strain Tohama I / ATCC BAA-589 / NCTC 13251), this protein is Large ribosomal subunit protein bL31B.